A 249-amino-acid polypeptide reads, in one-letter code: Aspartate/glutamate leucyltransferase (249 aa).

Belongs to the R-transferase family. Bpt subfamily.

The protein localises to the cytoplasm. The enzyme catalyses N-terminal L-glutamyl-[protein] + L-leucyl-tRNA(Leu) = N-terminal L-leucyl-L-glutamyl-[protein] + tRNA(Leu) + H(+). It carries out the reaction N-terminal L-aspartyl-[protein] + L-leucyl-tRNA(Leu) = N-terminal L-leucyl-L-aspartyl-[protein] + tRNA(Leu) + H(+). In terms of biological role, functions in the N-end rule pathway of protein degradation where it conjugates Leu from its aminoacyl-tRNA to the N-termini of proteins containing an N-terminal aspartate or glutamate. The chain is Aspartate/glutamate leucyltransferase from Brucella abortus (strain S19).